A 168-amino-acid chain; its full sequence is Protein-export protein SecB (168 aa).

This sequence belongs to the SecB family. In terms of assembly, homotetramer, a dimer of dimers. One homotetramer interacts with 1 SecA dimer.

The protein resides in the cytoplasm. One of the proteins required for the normal export of preproteins out of the cell cytoplasm. It is a molecular chaperone that binds to a subset of precursor proteins, maintaining them in a translocation-competent state. It also specifically binds to its receptor SecA. This Haemophilus influenzae (strain PittGG) protein is Protein-export protein SecB.